The following is a 1077-amino-acid chain: Error-prone DNA polymerase (1077 aa).

This sequence belongs to the DNA polymerase type-C family. DnaE2 subfamily.

It is found in the cytoplasm. It catalyses the reaction DNA(n) + a 2'-deoxyribonucleoside 5'-triphosphate = DNA(n+1) + diphosphate. Its function is as follows. DNA polymerase involved in damage-induced mutagenesis and translesion synthesis (TLS). It is not the major replicative DNA polymerase. The sequence is that of Error-prone DNA polymerase from Brucella suis biovar 1 (strain 1330).